We begin with the raw amino-acid sequence, 879 residues long: Alanine--tRNA ligase (879 aa).

4 residues coordinate Zn(2+): His570, His574, Cys672, and His676.

It belongs to the class-II aminoacyl-tRNA synthetase family. Zn(2+) is required as a cofactor.

It is found in the cytoplasm. It carries out the reaction tRNA(Ala) + L-alanine + ATP = L-alanyl-tRNA(Ala) + AMP + diphosphate. Its function is as follows. Catalyzes the attachment of alanine to tRNA(Ala) in a two-step reaction: alanine is first activated by ATP to form Ala-AMP and then transferred to the acceptor end of tRNA(Ala). Also edits incorrectly charged Ser-tRNA(Ala) and Gly-tRNA(Ala) via its editing domain. In Nitratidesulfovibrio vulgaris (strain ATCC 29579 / DSM 644 / CCUG 34227 / NCIMB 8303 / VKM B-1760 / Hildenborough) (Desulfovibrio vulgaris), this protein is Alanine--tRNA ligase.